The primary structure comprises 162 residues: FCS-Like Zinc finger 6 (162 aa).

2 disordered regions span residues 25–47 and 121–162; these read NLPSESEPSNQQKPTVASPYGSN and RQEQ…AAAV. Over residues 27–47 the composition is skewed to polar residues; that stretch reads PSESEPSNQQKPTVASPYGSN. The segment at 88–132 adopts an FLZ-type zinc-finger fold; that stretch reads HFLRSCALCERLLVPGRDIYMYRGDKAFCSSECRQEQMAQDERKE. The span at 147–162 shows a compositional bias: low complexity; sequence APARAKPGKGRAAAAV.

It belongs to the FLZ family. In terms of assembly, interacts with KIN10 and KIN11 via its FLZ-type zinc finger domain. In terms of tissue distribution, early expressed in hypocotyl and cotyledon. Later expressed in old or senescing leaves and in pistil, pollen and filament of open flowers.

The protein resides in the nucleus. It is found in the cytoplasm. Its subcellular location is the endoplasmic reticulum. Functionally, may act as an adapter to facilitate the interaction of SnRK1 complex with effector proteins, conferring tissue- and stimulus-type specific differences in the SnRK1 regulation pathway. Negatively regulates KIN10 leading to a repression of the SnRK1 signaling pathway. This is FCS-Like Zinc finger 6 from Arabidopsis thaliana (Mouse-ear cress).